The sequence spans 415 residues: Levansucrase (415 aa).

Sucrose contacts are provided by Trp45, Asp46, Ala132, Arg202, and Asp203. The Nucleophile role is filled by Asp46. Residue Glu287 is the Proton donor/acceptor of the active site.

It belongs to the glycosyl hydrolase 68 family.

It catalyses the reaction [6)-beta-D-fructofuranosyl-(2-&gt;](n) alpha-D-glucopyranoside + sucrose = [6)-beta-D-fructofuranosyl-(2-&gt;](n+1) alpha-D-glucopyranoside + D-glucose. Catalyzes the synthesis of levan, a fructose polymer, by transferring the fructosyl moiety from sucrose to a growing acceptor molecule. The protein is Levansucrase of Rahnella aquatilis (strain ATCC 33071 / DSM 4594 / JCM 1683 / NBRC 105701 / NCIMB 13365 / CIP 78.65).